The following is a 146-amino-acid chain: MEATRSDDPSLNPIRNRNPNPNPNPNPLSTIISSAQVWPTIDGPLGLTEEASVDYARRFYKFGFALLPWLWFVNCFYFWPVLRHSRAFPQIRNYVVRSAIGFSVFTALLSAWALTFSIGGEQLFGPLYDKLVMYNVADRLGLSGLA.

Positions 1–26 (MEATRSDDPSLNPIRNRNPNPNPNPN) are disordered. Topologically, residues 1–61 (MEATRSDDPS…SVDYARRFYK (61 aa)) are lumenal. The span at 9 to 19 (PSLNPIRNRNP) shows a compositional bias: low complexity. Residues 62–82 (FGFALLPWLWFVNCFYFWPVL) traverse the membrane as a helical segment. The Cytoplasmic segment spans residues 83–98 (RHSRAFPQIRNYVVRS). Residues 99 to 119 (AIGFSVFTALLSAWALTFSIG) traverse the membrane as a helical segment. At 120-146 (GEQLFGPLYDKLVMYNVADRLGLSGLA) the chain is on the lumenal side.

Belongs to the PEN-2 family. In terms of assembly, probable component of the gamma-secretase complex, a complex composed of a presenilin homodimer, nicastrin, APH1 and PEN2.

It is found in the membrane. Functionally, probable subunit of the gamma-secretase complex, an endoprotease complex that catalyzes the intramembrane cleavage of integral membrane proteins such as Notch receptors. In Arabidopsis thaliana (Mouse-ear cress), this protein is Probable gamma-secretase subunit PEN-2.